Here is a 669-residue protein sequence, read N- to C-terminus: Zinc finger MYM-type protein 5 (669 aa).

Residues lysine 88, lysine 91, lysine 134, lysine 149, lysine 166, and lysine 225 each participate in a glycyl lysine isopeptide (Lys-Gly) (interchain with G-Cter in SUMO2) cross-link. 4 consecutive MYM-type zinc fingers follow at residues 265–299 (HLFC…KKAN), 311–351 (QEFY…RHEV), 358–393 (HKLC…KSTG), and 404–431 (KRFC…ASEN). Residues lysine 443, lysine 455, lysine 462, and lysine 552 each participate in a glycyl lysine isopeptide (Lys-Gly) (interchain with G-Cter in SUMO2) cross-link.

As to quaternary structure, interacts (via N-terminal 120 amino acid region) with ETV5 (via C-terminal).

It is found in the nucleus. Functions as a transcriptional regulator. This chain is Zinc finger MYM-type protein 5 (ZMYM5), found in Homo sapiens (Human).